The primary structure comprises 735 residues: MENQNRQNAAQCPFHGSVTNQSSNRTTNKDWWPNQLNLSILHQHDRKTNPHDEEFNYAEEFQKLDYWALKEDLRKLMTESQDWWPADYGHYGPLFIRMAWHSAGTYRIGDGRGGASTGTQRFAPLNSWPDNANLDKARRLLWPIKKKYGNKISWADLFILAGNVAIESMGGKTIGFGGGRVDVWHPEEDVYWGSEKEWLASERYSGDRELENPLAAVQMGLIYVNPEGPDGKPDPKAAARDIRETFRRMGMNDEETVALIAGGHTFGKAHGAGPATHVGPEPEAAPIEAQGLGWISSYGKGKGSDTITSGIEGAWTPTPTQWDTSYFDMLFGYDWWLTKSPAGAWQWMAVDPDEKDLAPDAEDPSKKVPTMMMTTDLALRFDPEYEKIARRFHQNPEEFAEAFARAWFKLTHRDMGPKTRYLGPEVPKEDFIWQDPIPEVDYELTEAEIEEIKAKILNSGLTVSELVKTAWASASTFRNSDKRGGANGARIRLAPQKDWEVNEPERLAKVLSVYEDIQRELPKKVSIADLIVLGGSAAVEKAARDAGFDVKVPFFPGRGDATQEQTDVESFAVLEPFADGFRNYQKQEYSVPPEELLVDKAQLLGLTAPEMTVLVGGLRVLGANYRDLPHGVFTDRIGVLTNDFFVNLLDMNYEWVPTDSGIYEIRDRKTGEVRWTATRVDLIFGSNSILRSYAEFYAQDDNQEKFVRDFINAWVKVMNADRFDLVKKARESVTA.

Polar residues-rich tracts occupy residues 1 to 10 and 17 to 26; these read MENQNRQNAA and SVTNQSSNRT. Residues 1 to 30 form a disordered region; the sequence is MENQNRQNAAQCPFHGSVTNQSSNRTTNKD. Positions 100–223 form a cross-link, tryptophyl-tyrosyl-methioninium (Trp-Tyr) (with M-249); it reads WHSAGTYRIG…LAAVQMGLIY (124 aa). Catalysis depends on histidine 101, which acts as the Proton acceptor. A cross-link (tryptophyl-tyrosyl-methioninium (Tyr-Met) (with W-100)) is located at residues 223-249; it reads YVNPEGPDGKPDPKAAARDIRETFRRM. Histidine 264 contributes to the heme b binding site.

This sequence belongs to the peroxidase family. Peroxidase/catalase subfamily. Homodimer or homotetramer. It depends on heme b as a cofactor. Post-translationally, formation of the three residue Trp-Tyr-Met cross-link is important for the catalase, but not the peroxidase activity of the enzyme.

The catalysed reaction is H2O2 + AH2 = A + 2 H2O. It carries out the reaction 2 H2O2 = O2 + 2 H2O. Bifunctional enzyme with both catalase and broad-spectrum peroxidase activity. Also displays NADH oxidase, INH lyase and isonicotinoyl-NAD synthase activities. This Geobacillus stearothermophilus (Bacillus stearothermophilus) protein is Catalase-peroxidase.